Here is a 446-residue protein sequence, read N- to C-terminus: Probable D-serine dehydratase (446 aa).

Residue Lys116 is modified to N6-(pyridoxal phosphate)lysine.

The protein belongs to the serine/threonine dehydratase family. DsdA subfamily. Requires pyridoxal 5'-phosphate as cofactor.

It catalyses the reaction D-serine = pyruvate + NH4(+). The protein is Probable D-serine dehydratase of Bacillus thuringiensis subsp. konkukian (strain 97-27).